A 640-amino-acid chain; its full sequence is Chaperone protein DnaK (640 aa).

Thr-196 bears the Phosphothreonine; by autocatalysis mark. Disordered regions lie at residues 487–526 (GKEQSIKIESSSKLTDAEISKMKEDAKEHAAEDQKRKEEI) and 593–640 (SHLY…GNDK). Positions 501–526 (TDAEISKMKEDAKEHAAEDQKRKEEI) are enriched in basic and acidic residues. The segment covering 595-613 (LYQSQGPESSQPETAAQSD) has biased composition (polar residues). The span at 630 to 640 (AEYEVIDGNDK) shows a compositional bias: acidic residues.

Belongs to the heat shock protein 70 family.

Functionally, acts as a chaperone. In Pelodictyon phaeoclathratiforme (strain DSM 5477 / BU-1), this protein is Chaperone protein DnaK.